A 445-amino-acid polypeptide reads, in one-letter code: Methionine aminopeptidase 2-1 (445 aa).

Positions 1-99 (MAAQVPTEAL…FPNKAYPKGE (99 aa)) are disordered. Residues 61 to 75 (KKKKKRKPKKKKKHP) show a composition bias toward basic residues. H198 lines the substrate pocket. Positions 218, 229, and 298 each coordinate a divalent metal cation. H306 contributes to the substrate binding site. Residues E331 and E426 each contribute to the a divalent metal cation site.

It belongs to the peptidase M24A family. Methionine aminopeptidase eukaryotic type 2 subfamily. Requires Co(2+) as cofactor. Zn(2+) serves as cofactor. The cofactor is Mn(2+). It depends on Fe(2+) as a cofactor.

The protein localises to the cytoplasm. The catalysed reaction is Release of N-terminal amino acids, preferentially methionine, from peptides and arylamides.. Cotranslationally removes the N-terminal methionine from nascent proteins. The N-terminal methionine is often cleaved when the second residue in the primary sequence is small and uncharged (Met-Ala-, Cys, Gly, Pro, Ser, Thr, or Val). This chain is Methionine aminopeptidase 2-1, found in Fusarium vanettenii (strain ATCC MYA-4622 / CBS 123669 / FGSC 9596 / NRRL 45880 / 77-13-4) (Fusarium solani subsp. pisi).